The chain runs to 440 residues: Histidinol dehydrogenase (440 aa).

NAD(+) contacts are provided by Y133, Q194, and N217. Substrate contacts are provided by S240, Q262, and H265. Zn(2+) is bound by residues Q262 and H265. Residues E330 and H331 each act as proton acceptor in the active site. Positions 331, 364, 418, and 423 each coordinate substrate. D364 contributes to the Zn(2+) binding site. Position 423 (H423) interacts with Zn(2+).

Belongs to the histidinol dehydrogenase family. Zn(2+) is required as a cofactor.

The enzyme catalyses L-histidinol + 2 NAD(+) + H2O = L-histidine + 2 NADH + 3 H(+). The protein operates within amino-acid biosynthesis; L-histidine biosynthesis; L-histidine from 5-phospho-alpha-D-ribose 1-diphosphate: step 9/9. Catalyzes the sequential NAD-dependent oxidations of L-histidinol to L-histidinaldehyde and then to L-histidine. The sequence is that of Histidinol dehydrogenase from Nitrosospira multiformis (strain ATCC 25196 / NCIMB 11849 / C 71).